The sequence spans 207 residues: Imidazole glycerol phosphate synthase subunit HisH (207 aa).

The Glutamine amidotransferase type-1 domain occupies 1 to 206; that stretch reads MMIVIGYDAG…KEYVYENTAR (206 aa). The active-site Nucleophile is the C79. Catalysis depends on residues H181 and E183.

Heterodimer of HisH and HisF.

It localises to the cytoplasm. The catalysed reaction is 5-[(5-phospho-1-deoxy-D-ribulos-1-ylimino)methylamino]-1-(5-phospho-beta-D-ribosyl)imidazole-4-carboxamide + L-glutamine = D-erythro-1-(imidazol-4-yl)glycerol 3-phosphate + 5-amino-1-(5-phospho-beta-D-ribosyl)imidazole-4-carboxamide + L-glutamate + H(+). The enzyme catalyses L-glutamine + H2O = L-glutamate + NH4(+). It functions in the pathway amino-acid biosynthesis; L-histidine biosynthesis; L-histidine from 5-phospho-alpha-D-ribose 1-diphosphate: step 5/9. Its function is as follows. IGPS catalyzes the conversion of PRFAR and glutamine to IGP, AICAR and glutamate. The HisH subunit catalyzes the hydrolysis of glutamine to glutamate and ammonia as part of the synthesis of IGP and AICAR. The resulting ammonia molecule is channeled to the active site of HisF. In Streptococcus gordonii (strain Challis / ATCC 35105 / BCRC 15272 / CH1 / DL1 / V288), this protein is Imidazole glycerol phosphate synthase subunit HisH.